We begin with the raw amino-acid sequence, 447 residues long: Tubulin beta-1 chain (447 aa).

GTP contacts are provided by Gln-11, Glu-69, Ser-138, Gly-142, Thr-143, Gly-144, Asn-204, and Asn-226. Glu-69 is a Mg(2+) binding site. A disordered region spans residues 428–447 (ATADEDAEFDEEQEQEIEDN). The span at 429 to 447 (TADEDAEFDEEQEQEIEDN) shows a compositional bias: acidic residues.

This sequence belongs to the tubulin family. As to quaternary structure, dimer of alpha and beta chains. A typical microtubule is a hollow water-filled tube with an outer diameter of 25 nm and an inner diameter of 15 nM. Alpha-beta heterodimers associate head-to-tail to form protofilaments running lengthwise along the microtubule wall with the beta-tubulin subunit facing the microtubule plus end conferring a structural polarity. Microtubules usually have 13 protofilaments but different protofilament numbers can be found in some organisms and specialized cells. Requires Mg(2+) as cofactor.

The protein resides in the cytoplasm. The protein localises to the cytoskeleton. In terms of biological role, tubulin is the major constituent of microtubules, a cylinder consisting of laterally associated linear protofilaments composed of alpha- and beta-tubulin heterodimers. Microtubules grow by the addition of GTP-tubulin dimers to the microtubule end, where a stabilizing cap forms. Below the cap, tubulin dimers are in GDP-bound state, owing to GTPase activity of alpha-tubulin. This is Tubulin beta-1 chain from Manduca sexta (Tobacco hawkmoth).